Consider the following 443-residue polypeptide: MSVNADSQHSNNSSHQASEKAFDRARSLIPGGVNSPVRAFGSVGGTPPFITSAQGSTLHDVDGNSYVDLFCSWGPMIHGHAHPQIVEAVREAAGHGLSFGAPTTMEVDLVEEIDRRTSVEKARLVNSGTEATMSAIRLARGYTGRDKILKFEGCYHGHVDSLLVAAGSGVATFGLPDSPGITKAAAGDTVVVPYRDVQAVEDAFASHEGEIAAIIVEGAAGNMGTVNPRGFNAELQRIAHENGALLIVDEVMTGFRVSESGWYGKDGVAGDLTTFGKVVSGGLPAAAFGGKAEIMDHLAPVGPVYQAGTLSGNPVAVASGLASLKLADAAAYQTLDANADALAGILSDALTKASVAHHIQRAGSMLSVRFAEGEGANFADMKAADTFRYPAFFHAFLDHGVFAPPSVFETWFVSTALTGADFEKIAAAATPAAEAAAAATPSA.

Low complexity predominate over residues 1-16 (MSVNADSQHSNNSSHQ). The disordered stretch occupies residues 1–22 (MSVNADSQHSNNSSHQASEKAF). K277 is subject to N6-(pyridoxal phosphate)lysine.

This sequence belongs to the class-III pyridoxal-phosphate-dependent aminotransferase family. HemL subfamily. Homodimer. It depends on pyridoxal 5'-phosphate as a cofactor.

The protein resides in the cytoplasm. The catalysed reaction is (S)-4-amino-5-oxopentanoate = 5-aminolevulinate. Its pathway is porphyrin-containing compound metabolism; protoporphyrin-IX biosynthesis; 5-aminolevulinate from L-glutamyl-tRNA(Glu): step 2/2. In Corynebacterium jeikeium (strain K411), this protein is Glutamate-1-semialdehyde 2,1-aminomutase.